The following is a 94-amino-acid chain: Integration host factor subunit beta (94 aa).

The protein belongs to the bacterial histone-like protein family. In terms of assembly, heterodimer of an alpha and a beta chain.

In terms of biological role, this protein is one of the two subunits of integration host factor, a specific DNA-binding protein that functions in genetic recombination as well as in transcriptional and translational control. This Aeromonas hydrophila subsp. hydrophila (strain ATCC 7966 / DSM 30187 / BCRC 13018 / CCUG 14551 / JCM 1027 / KCTC 2358 / NCIMB 9240 / NCTC 8049) protein is Integration host factor subunit beta.